The chain runs to 1170 residues: Cellulose synthase-like protein D2 (1170 aa).

2 disordered regions span residues 1–75 (MASN…PESG) and 269–295 (NEVD…EFTS). A compositionally biased stretch (low complexity) spans 10–24 (RHSNSSRLSRMSYSG). Gly residues predominate over residues 273–288 (NGGGGGGGGGLGGGDG). 2 helical membrane-spanning segments follow: residues 311–331 (VLSP…LFLA) and 341–361 (AMWL…SWLL). Asp441 is a catalytic residue. Residues 527 to 551 (HAREEIKAMKRQREAALDDVVEAVK) adopt a coiled-coil conformation. Residue Asp873 is part of the active site. 6 helical membrane passes run 955–975 (IFLI…QFIV), 981–1001 (TFLT…VLEI), 1027–1047 (LAAV…SFTL), 1070–1090 (SLMI…AVGF), 1104–1124 (LLGG…FAKG), and 1134–1154 (TIVF…WVAI).

Belongs to the glycosyltransferase 2 family. Plant cellulose synthase-like D subfamily.

Its subcellular location is the golgi apparatus membrane. Thought to be a Golgi-localized beta-glycan synthase that polymerize the backbones of noncellulosic polysaccharides (hemicelluloses) of plant cell wall. The sequence is that of Cellulose synthase-like protein D2 (CSLD2) from Oryza sativa subsp. indica (Rice).